We begin with the raw amino-acid sequence, 174 residues long: DNA endonuclease I-HmuI (174 aa).

In Bacillus subtilis (Bacteriophage SP01), this protein is DNA endonuclease I-HmuI.